Here is a 256-residue protein sequence, read N- to C-terminus: Ubiquinone/menaquinone biosynthesis C-methyltransferase UbiE (256 aa).

S-adenosyl-L-methionine is bound by residues Thr-79, Asp-100, and 128-129 (DA).

It belongs to the class I-like SAM-binding methyltransferase superfamily. MenG/UbiE family.

It carries out the reaction a 2-demethylmenaquinol + S-adenosyl-L-methionine = a menaquinol + S-adenosyl-L-homocysteine + H(+). It catalyses the reaction a 2-methoxy-6-(all-trans-polyprenyl)benzene-1,4-diol + S-adenosyl-L-methionine = a 5-methoxy-2-methyl-3-(all-trans-polyprenyl)benzene-1,4-diol + S-adenosyl-L-homocysteine + H(+). Its pathway is quinol/quinone metabolism; menaquinone biosynthesis; menaquinol from 1,4-dihydroxy-2-naphthoate: step 2/2. The protein operates within cofactor biosynthesis; ubiquinone biosynthesis. Its function is as follows. Methyltransferase required for the conversion of demethylmenaquinol (DMKH2) to menaquinol (MKH2) and the conversion of 2-polyprenyl-6-methoxy-1,4-benzoquinol (DDMQH2) to 2-polyprenyl-3-methyl-6-methoxy-1,4-benzoquinol (DMQH2). This chain is Ubiquinone/menaquinone biosynthesis C-methyltransferase UbiE, found in Pseudomonas syringae pv. tomato (strain ATCC BAA-871 / DC3000).